The sequence spans 461 residues: Gram-negative bacteria-binding protein 2 (461 aa).

An N-terminal signal peptide occupies residues 1–20 (MRWEFLPCLLLLISNNKIFG). The region spanning 21-115 (FKVPSINFEM…TRVIINTRLL (95 aa)) is the CBM39 domain. Asparagine 71, asparagine 170, asparagine 177, and asparagine 364 each carry an N-linked (GlcNAc...) asparagine glycan. The GH16 domain occupies 179 to 461 (TTWKHDIRQR…VIDYVRVYAE (283 aa)).

Belongs to the insect beta-1,3-glucan binding protein family.

The protein localises to the secreted. Involved in the recognition of invading microorganisms. Binds specifically to beta-1,3-glucan and activates the phenoloxidase cascade. The chain is Gram-negative bacteria-binding protein 2 from Drosophila melanogaster (Fruit fly).